The following is a 122-amino-acid chain: Ribosomal protein eL22-like (122 aa).

Phosphoserine occurs at positions 112, 118, and 120.

It belongs to the eukaryotic ribosomal protein eL22 family.

This is Ribosomal protein eL22-like (RPL22L1) from Bos taurus (Bovine).